A 399-amino-acid chain; its full sequence is Succinate--CoA ligase [ADP-forming] subunit beta (399 aa).

The region spanning 9-254 (KQVLAKYGVP…EDEEDPMELE (246 aa)) is the ATP-grasp domain. ATP is bound by residues Lys-46, 53-55 (GRG), Glu-109, Cys-112, and Glu-117. Residues Asn-209 and Asp-223 each contribute to the Mg(2+) site. Residues Asn-274 and 331–333 (GIM) contribute to the substrate site.

It belongs to the succinate/malate CoA ligase beta subunit family. As to quaternary structure, heterotetramer of two alpha and two beta subunits. Mg(2+) is required as a cofactor.

It carries out the reaction succinate + ATP + CoA = succinyl-CoA + ADP + phosphate. The enzyme catalyses GTP + succinate + CoA = succinyl-CoA + GDP + phosphate. It participates in carbohydrate metabolism; tricarboxylic acid cycle; succinate from succinyl-CoA (ligase route): step 1/1. Functionally, succinyl-CoA synthetase functions in the citric acid cycle (TCA), coupling the hydrolysis of succinyl-CoA to the synthesis of either ATP or GTP and thus represents the only step of substrate-level phosphorylation in the TCA. The beta subunit provides nucleotide specificity of the enzyme and binds the substrate succinate, while the binding sites for coenzyme A and phosphate are found in the alpha subunit. The polypeptide is Succinate--CoA ligase [ADP-forming] subunit beta (Rhodospirillum rubrum (strain ATCC 11170 / ATH 1.1.1 / DSM 467 / LMG 4362 / NCIMB 8255 / S1)).